Here is a 370-residue protein sequence, read N- to C-terminus: Thiamine-repressible mitochondrial transport protein THI74 (370 aa).

Residues 1–10 (MNRVGIDVDH) lie on the Cytoplasmic side of the membrane. A helical transmembrane segment spans residues 11–31 (MIGVLLLAVVVVFWVGASCLT). The Mitochondrial intermembrane portion of the chain corresponds to 32 to 42 (NELLETNAYNK). The chain crosses the membrane as a helical span at residues 43-63 (PFFLTYLNISSFALYLTPDLW). Topologically, residues 64–119 (RIIQSRRKSLQERTERTLPIHTQESFSEFLPLLSSTPSTSSNLSSIADTKVKDTMR) are cytoplasmic. Residues 120-140 (LSLLFCVLWFVANLAANAALS) traverse the membrane as a helical segment. The 62-residue stretch at 129-190 (FVANLAANAA…SLFGIILIVM (62 aa)) folds into the EamA domain. The Mitochondrial intermembrane portion of the chain corresponds to 141–146 (YTTVAS). Residues 147 to 167 (STILSSTSSFFTLFLATSLGI) form a helical membrane-spanning segment. The Cytoplasmic segment spans residues 168-169 (ET). Residues 170–190 (FSTKKLLGLFVSLFGIILIVM) form a helical membrane-spanning segment. Residues 191-203 (QSSKQQDSVSASS) are Mitochondrial intermembrane-facing. A helical transmembrane segment spans residues 204-224 (FLVGNTLALLGSLGYSVYTTL). Residues 225-239 (LKYEISSKGLRLDIQ) are Cytoplasmic-facing. Residues 240–260 (MFLGYVGIFTFLLFWPILIIL) traverse the membrane as a helical segment. The Mitochondrial intermembrane portion of the chain corresponds to 261 to 273 (DITHMETFELPSN). The chain crosses the membrane as a helical span at residues 274–294 (FHISFLVMLNCIIIFVSDYFW). The Cytoplasmic portion of the chain corresponds to 295–303 (CKALILTSP). A helical transmembrane segment spans residues 304–324 (LVVTVALTFTIPLAMFADFVW). Residues 325 to 326 (RE) lie on the Mitochondrial intermembrane side of the membrane. A helical membrane pass occupies residues 327 to 347 (AFFTPWYIIGVIFIFVSFFLV). The Cytoplasmic segment spans residues 348–370 (NHRGESAVEKDCAAVEKGPILDA).

The protein resides in the mitochondrion membrane. Functionally, may be involved in thiaminediphosphate transport across the mitochondrial membrane. In Saccharomyces cerevisiae (strain ATCC 204508 / S288c) (Baker's yeast), this protein is Thiamine-repressible mitochondrial transport protein THI74 (THI74).